A 199-amino-acid chain; its full sequence is Securin (199 aa).

Disordered stretches follow at residues 1-23 (MATL…SKDG) and 58-108 (RKAL…DDAY). A2 is subject to N-acetylalanine. The span at 7–23 (VDKDNEEPGSRLASKDG) shows a compositional bias: basic and acidic residues. The D-box signature appears at 58–61 (RKAL). The TEK-box 1 motif lies at 68-70 (TEK). Polar residues predominate over residues 76-85 (KPLQSKQPTL). A TEK-box 2 motif is present at residues 91 to 93 (TEK). S162 is modified (phosphoserine). The SH3-binding motif lies at 179–192 (PPSALSALDVELPP).

The protein belongs to the securin family. As to quaternary structure, interacts with the caspase-like ESPL1, and prevents its protease activity by covering its active site. Interacts with p53/TP53 and blocks its activity probably by blocking its binding to DNA. Interacts with the Ku 70 kDa subunit of ds-DNA kinase. Interacts with PTTG1IP. Interacts with RPS10 and DNAJA1. In terms of processing, phosphorylated at Ser-162 by CDK1 during mitosis. Post-translationally, phosphorylated in vitro by ds-DNA kinase. Ubiquitinated through 'Lys-11' linkage of ubiquitin moieties by the anaphase promoting complex (APC) at the onset of anaphase, conducting to its degradation. 'Lys-11'-linked ubiquitination is mediated by the E2 ligase UBE2C/UBCH10. As to expression, expressed at low level in most tissues, except in adult testis, where it is highly expressed. Expressed in both spermatocytes and spermatids.

Its subcellular location is the cytoplasm. The protein resides in the nucleus. Regulatory protein, which plays a central role in chromosome stability, in the p53/TP53 pathway, and DNA repair. Probably acts by blocking the action of key proteins. During the mitosis, it blocks Separase/ESPL1 function, preventing the proteolysis of the cohesin complex and the subsequent segregation of the chromosomes. At the onset of anaphase, it is ubiquitinated, conducting to its destruction and to the liberation of ESPL1. Its function is however not limited to a blocking activity, since it is required to activate ESPL1. Negatively regulates the transcriptional activity and related apoptosis activity of p53/TP53. The negative regulation of p53/TP53 may explain the strong transforming capability of the protein when it is overexpressed. May also play a role in DNA repair via its interaction with Ku, possibly by connecting DNA damage-response pathways with sister chromatid separation. This Rattus norvegicus (Rat) protein is Securin (Pttg1).